The chain runs to 399 residues: Acetate kinase (399 aa).

Mg(2+) is bound at residue Asn-10. Lys-17 serves as a coordination point for ATP. Residue Arg-91 coordinates substrate. The active-site Proton donor/acceptor is the Asp-148. ATP-binding positions include 208 to 212, 283 to 285, and 331 to 335; these read HLGNG, DCR, and GIGEN. Glu-385 provides a ligand contact to Mg(2+).

The protein belongs to the acetokinase family. As to quaternary structure, homodimer. Requires Mg(2+) as cofactor. The cofactor is Mn(2+).

The protein resides in the cytoplasm. The catalysed reaction is acetate + ATP = acetyl phosphate + ADP. The protein operates within metabolic intermediate biosynthesis; acetyl-CoA biosynthesis; acetyl-CoA from acetate: step 1/2. Functionally, catalyzes the formation of acetyl phosphate from acetate and ATP. Can also catalyze the reverse reaction. The sequence is that of Acetate kinase from Shewanella sp. (strain ANA-3).